The primary structure comprises 233 residues: Large ribosomal subunit protein uL1 (233 aa).

The protein belongs to the universal ribosomal protein uL1 family. As to quaternary structure, part of the 50S ribosomal subunit.

Its function is as follows. Binds directly to 23S rRNA. The L1 stalk is quite mobile in the ribosome, and is involved in E site tRNA release. In terms of biological role, protein L1 is also a translational repressor protein, it controls the translation of the L11 operon by binding to its mRNA. This Photorhabdus laumondii subsp. laumondii (strain DSM 15139 / CIP 105565 / TT01) (Photorhabdus luminescens subsp. laumondii) protein is Large ribosomal subunit protein uL1.